The chain runs to 450 residues: MKTLILAAGLGKRMNSKYPKVIHKIFNKPMINWVIETAKNFGKVAVVLGHKYELVKKVIPEDVEIYLQNQQLGTAHAVMSAIEFVSPNDNLLILYGDVPFISHETLKRLEKEHVKSNSDVTILTSILENPTGYGRIVRDGKIRIIEDKDATEEVKKIKEINTGIYIIKGNFLIENINKIENNNTQKEYYLTDILKFTDNISTVTTNDVDEITGVNNRIQLANLEKKIRRKINEKLMNQGVRIIDPNAVYIDPQVKIGRDTLIYPFTFIEGETEIGEDCVIGPLTRIKESKIGNKVTINRSEVEKSVIEDNVSVGPFARLREGTTLDENVKIGNFVETKKSSIGKNSKAQHLTYLGDATIGNNVNIGAGTITCNYDGQTKHPTYIEDNAFIGSNNSLVAPVKIGKNAITAAGSTITNNVPENSLAIARQKQINKENWVLRKGGQKNANNKK.

The interval 1-217 (MKTLILAAGL…VDEITGVNNR (217 aa)) is pyrophosphorylase. UDP-N-acetyl-alpha-D-glucosamine-binding positions include 6 to 9 (LAAG), lysine 20, glutamine 68, 73 to 74 (GT), 95 to 97 (YGD), glycine 134, glutamate 146, asparagine 161, and asparagine 215. Residue aspartate 97 participates in Mg(2+) binding. Residue asparagine 215 participates in Mg(2+) binding. Residues 218–238 (IQLANLEKKIRRKINEKLMNQ) are linker. Residues 239–450 (GVRIIDPNAV…GGQKNANNKK (212 aa)) form an N-acetyltransferase region. Residues arginine 320 and lysine 338 each contribute to the UDP-N-acetyl-alpha-D-glucosamine site. Histidine 350 (proton acceptor) is an active-site residue. Residues tyrosine 353 and asparagine 364 each contribute to the UDP-N-acetyl-alpha-D-glucosamine site. Acetyl-CoA is bound by residues alanine 367, 373–374 (NY), serine 392, alanine 410, and arginine 427.

In the N-terminal section; belongs to the N-acetylglucosamine-1-phosphate uridyltransferase family. The protein in the C-terminal section; belongs to the transferase hexapeptide repeat family. Homotrimer. Mg(2+) serves as cofactor.

The protein localises to the cytoplasm. The enzyme catalyses alpha-D-glucosamine 1-phosphate + acetyl-CoA = N-acetyl-alpha-D-glucosamine 1-phosphate + CoA + H(+). The catalysed reaction is N-acetyl-alpha-D-glucosamine 1-phosphate + UTP + H(+) = UDP-N-acetyl-alpha-D-glucosamine + diphosphate. It participates in nucleotide-sugar biosynthesis; UDP-N-acetyl-alpha-D-glucosamine biosynthesis; N-acetyl-alpha-D-glucosamine 1-phosphate from alpha-D-glucosamine 6-phosphate (route II): step 2/2. Its pathway is nucleotide-sugar biosynthesis; UDP-N-acetyl-alpha-D-glucosamine biosynthesis; UDP-N-acetyl-alpha-D-glucosamine from N-acetyl-alpha-D-glucosamine 1-phosphate: step 1/1. It functions in the pathway bacterial outer membrane biogenesis; LPS lipid A biosynthesis. Catalyzes the last two sequential reactions in the de novo biosynthetic pathway for UDP-N-acetylglucosamine (UDP-GlcNAc). The C-terminal domain catalyzes the transfer of acetyl group from acetyl coenzyme A to glucosamine-1-phosphate (GlcN-1-P) to produce N-acetylglucosamine-1-phosphate (GlcNAc-1-P), which is converted into UDP-GlcNAc by the transfer of uridine 5-monophosphate (from uridine 5-triphosphate), a reaction catalyzed by the N-terminal domain. This is Bifunctional protein GlmU from Thermosipho melanesiensis (strain DSM 12029 / CIP 104789 / BI429).